A 310-amino-acid polypeptide reads, in one-letter code: MSLSTLFSPNTYNINSKSQTLNNLPSNPTSQTNTLWSNNAYNPPHLMFGSTDLSNGGGGGGQKGEKGDKGETGSNGLKGETGSNGLKGETGSGDKGDKGDSGTDGLKGQAGTDGLKGQAGTDGLKGDSGTDGLKGQTGNDGLKGQAGNDGIKGDKGEPGNDGLKGQTGTQGIKGDPGAKGDPGTSVVLSSGIWTPSVTFSTIFTGITPSTSIYSRIGNIVTFSIFTNATIPANMASGIIYFTVPVASSDFNGNNVIGTASITGNSTGVVQYGILTATASTAGIVLSMKIQASTSISVAIYATGQYFIPPG.

The span at 1 to 41 shows a compositional bias: polar residues; it reads MSLSTLFSPNTYNINSKSQTLNNLPSNPTSQTNTLWSNNAY. The interval 1 to 183 is disordered; the sequence is MSLSTLFSPN…GDPGAKGDPG (183 aa). 2 consecutive Collagen-like domains span residues 61 to 119 and 123 to 182; these read GQKG…KGQA and GLKG…KGDP. Residues 92 to 101 are compositionally biased toward basic and acidic residues; sequence SGDKGDKGDS. 2 N-linked (GlcNAc...) asparagine; by host glycosylation sites follow: Asn-227 and Asn-264.

This sequence belongs to the sputnik virus V6 family.

This is Collagen-like protein V6 from Sputnik virophage.